The chain runs to 299 residues: Mitochondrial 2-oxodicarboxylate carrier (299 aa).

Solcar repeat units follow at residues 11 to 100 (REAS…YKKL), 107 to 196 (SPAL…VKNM), and 205 to 294 (LEFL…TYSW). 6 helical membrane-spanning segments follow: residues 17–37 (IVAG…LDVV), 70–89 (FGFY…KRAV), 113–133 (TIAG…FEVV), 167–187 (GLNK…MVYF), 205–225 (LEFL…SVIN), and 277–297 (LGPG…WLQE).

This sequence belongs to the mitochondrial carrier (TC 2.A.29) family.

Its subcellular location is the mitochondrion inner membrane. The catalysed reaction is 2-oxoadipate(in) + 2-oxoglutarate(out) = 2-oxoadipate(out) + 2-oxoglutarate(in). The enzyme catalyses hexanedioate(in) + 2-oxoglutarate(out) = hexanedioate(out) + 2-oxoglutarate(in). It carries out the reaction L-2-aminoadipate(in) + 2-oxoglutarate(out) = L-2-aminoadipate(out) + 2-oxoglutarate(in). It catalyses the reaction glutarate(in) + 2-oxoglutarate(out) = glutarate(out) + 2-oxoglutarate(in). The catalysed reaction is 2-oxoheptanedioate(in) + 2-oxoglutarate(out) = 2-oxoheptanedioate(out) + 2-oxoglutarate(in). The enzyme catalyses heptanedioate(in) + 2-oxoglutarate(out) = heptanedioate(out) + 2-oxoglutarate(in). It carries out the reaction citrate(in) + 2-oxoglutarate(out) = citrate(out) + 2-oxoglutarate(in). In terms of biological role, transports dicarboxylates across the inner membranes of mitochondria by a counter-exchange mechanism. Can transport 2-oxoadipate (2-oxohexanedioate), 2-oxoglutarate, adipate (hexanedioate), glutarate, and to a lesser extent, pimelate (heptanedioate), 2-oxopimelate (2-oxoheptanedioate), 2-aminoadipate (2-aminohexanedioate), oxaloacetate, and citrate. Plays a central role in catabolism of lysine, hydroxylysine, and tryptophan, by transporting common metabolite intermediates (such as 2-oxoadipate) into the mitochondria, where it is converted into acetyl-CoA and can enter the citric acid (TCA) cycle. In Pongo abelii (Sumatran orangutan), this protein is Mitochondrial 2-oxodicarboxylate carrier (SLC25A21).